The sequence spans 109 residues: UPF0060 membrane protein mma_0129 (109 aa).

A run of 4 helical transmembrane segments spans residues 7-27 (VALF…PYLW), 31-51 (GASI…VWLL), 63-83 (AAYG…VDGI), and 87-107 (NWDF…LFAP).

The protein belongs to the UPF0060 family.

The protein localises to the cell inner membrane. This is UPF0060 membrane protein mma_0129 from Janthinobacterium sp. (strain Marseille) (Minibacterium massiliensis).